The following is a 520-amino-acid chain: mRNA-capping enzyme subunit beta (520 aa).

The disordered stretch occupies residues 1-185 (MNVGSILNDD…PQPVFDDQDD (185 aa)). Composition is skewed to polar residues over residues 11–21 (PPSSGNANGND) and 44–56 (ITSM…SDST). The span at 92–108 (SSSSVGSSEHSSARSSP) shows a compositional bias: low complexity. Composition is skewed to basic and acidic residues over residues 126–135 (PATKTEKKAE) and 149–176 (KLEE…KKEP).

Belongs to the fungal TPase family. Heterodimer. The mRNA-capping enzyme is composed of two separate chains alpha and beta, respectively a mRNA guanylyltransferase and an mRNA 5'-triphosphate monophosphatase. Mg(2+) serves as cofactor.

It localises to the nucleus. The enzyme catalyses a 5'-end triphospho-ribonucleoside in mRNA + H2O = a 5'-end diphospho-ribonucleoside in mRNA + phosphate + H(+). First step of mRNA capping. Converts the 5'-triphosphate end of a nascent mRNA chain into a diphosphate end. The sequence is that of mRNA-capping enzyme subunit beta (CET1) from Candida albicans (strain SC5314 / ATCC MYA-2876) (Yeast).